Here is a 563-residue protein sequence, read N- to C-terminus: Delta-1-pyrroline-5-carboxylate dehydrogenase, mitochondrial (563 aa).

The N-terminal 23 residues, M1 to W23, are a transit peptide targeting the mitochondrion. K30 carries the N6-succinyllysine modification. Residue S43 is modified to Phosphoserine. K51 bears the N6-acetyllysine mark. Residues K92, K98, K113, K129, and K174 each carry the N6-acetyllysine; alternate modification. Residues K92, K98, K113, K129, and K174 each carry the N6-succinyllysine; alternate modification. NAD(+) contacts are provided by residues S207, K232, and G285–T289. E313 acts as the Proton acceptor in catalysis. Position 317 is an N6-acetyllysine (K317). N6-succinyllysine is present on K346. The active-site Nucleophile is the C347. An N6-acetyllysine mark is found at K364 and K375. K394 bears the N6-succinyllysine mark. An NAD(+)-binding site is contributed by E446. The residue at position 461 (K461) is an N6-acetyllysine. The residue at position 508 (K508) is an N6-acetyllysine; alternate. K508 is subject to N6-succinyllysine; alternate. Residue S512 coordinates substrate.

This sequence belongs to the aldehyde dehydrogenase family. In terms of assembly, homodimer.

The protein resides in the mitochondrion matrix. The catalysed reaction is L-glutamate 5-semialdehyde + NAD(+) + H2O = L-glutamate + NADH + 2 H(+). It functions in the pathway amino-acid degradation; L-proline degradation into L-glutamate; L-glutamate from L-proline: step 2/2. Functionally, irreversible conversion of delta-1-pyrroline-5-carboxylate (P5C), derived either from proline or ornithine, to glutamate. This is a necessary step in the pathway interconnecting the urea and tricarboxylic acid cycles. The preferred substrate is glutamic gamma-semialdehyde, other substrates include succinic, glutaric and adipic semialdehydes. This is Delta-1-pyrroline-5-carboxylate dehydrogenase, mitochondrial (Aldh4a1) from Rattus norvegicus (Rat).